Here is a 418-residue protein sequence, read N- to C-terminus: Vasopressin V1a receptor (418 aa).

The interval 1 to 43 (MRLSAGPDAGPSGNSSPWWPLATGAGNTSREAEALGEGNGPPR) is disordered. Over 1-52 (MRLSAGPDAGPSGNSSPWWPLATGAGNTSREAEALGEGNGPPRDVRNEELAK) the chain is Extracellular. An N-linked (GlcNAc...) asparagine glycan is attached at Asn27. The helical transmembrane segment at 53–76 (LEIAVLAVTFAVAVLGNSSVLLAL) threads the bilayer. At 77-88 (HRTPRKTSRMHL) the chain is on the cytoplasmic side. Residues 89-110 (FIRHLSLADLAVAFFQVLPQMC) traverse the membrane as a helical segment. Residues 111-125 (WDITYRFRGPDWLCR) lie on the Extracellular side of the membrane. A disulfide bridge links Cys124 with Cys203. The chain crosses the membrane as a helical span at residues 126-147 (VVKHLQVFGMFASAYMLVVMTA). Residues 148 to 168 (DRYIAVCHPLKTLQQPARRSR) are Cytoplasmic-facing. Residues 169-190 (LMIAAAWVLSFVLSTPQYFVFS) traverse the membrane as a helical segment. The Extracellular portion of the chain corresponds to 191–218 (MIEVNNVTKARDCWATFIQPWGSRAYVT). N-linked (GlcNAc...) asparagine glycosylation is present at Asn196. The chain crosses the membrane as a helical span at residues 219–239 (WMTGGIFVAPVVILGTCYGFI). Residues 240 to 293 (CYNIWCNVRGKTASRQSKGAEQAGVAFQKGFLLAPCVSSVKSISRAKIRTVKMT) are Cytoplasmic-facing. A helical transmembrane segment spans residues 294–313 (FVIVTAYIVCWAPFFIIQMW). The Extracellular segment spans residues 314-331 (SVWDPMSVWTESENPTIT). A helical membrane pass occupies residues 332–351 (ITALLGSLNSCCNPWIYMFF). The Cytoplasmic portion of the chain corresponds to 352-418 (SGHLLQDCVQ…KSIKFIPVST (67 aa)). S-palmitoyl cysteine attachment occurs at residues Cys365 and Cys366. The tract at residues 377-410 (DTDSMSRRQTFYSNNRSPTNSTGMWKDSPKSSKS) is disordered. Residues 383–399 (RRQTFYSNNRSPTNSTG) show a composition bias toward polar residues. Residue Ser404 is modified to Phosphoserine.

Belongs to the G-protein coupled receptor 1 family. Vasopressin/oxytocin receptor subfamily.

It is found in the cell membrane. Functionally, receptor for arginine vasopressin. The activity of this receptor is mediated by G proteins which activate a phosphatidyl-inositol-calcium second messenger system. Has been involved in social behaviors, including affiliation and attachment. This is Vasopressin V1a receptor (AVPR1A) from Homo sapiens (Human).